The following is a 1058-amino-acid chain: Structural maintenance of chromosomes protein 6A (1058 aa).

The Zinc-hook domain maps to 23 to 1049 (ILRIRLENFM…SMVKSHEKIK (1027 aa)). 50-57 (GQNGSGKS) serves as a coordination point for ATP. Residues 136–449 (KISSRKEELR…NDLKKHQTNK (314 aa)) adopt a coiled-coil conformation. Residues 450 to 633 (VTAFGGDKVI…PPRPRRPTRL (184 aa)) form a flexible hinge region. Residues 634-927 (CASFDDQIKD…RNKDLLKREL (294 aa)) are a coiled coil.

Belongs to the SMC family. SMC6 subfamily. As to quaternary structure, forms a heterodimer with SMC5. The SMC5-SMC6 complex is composed of the SMC5 and SMC6 heterodimer attached via their hinge domain and from the non-SMC subunit NSE4A or NSE4B. As to expression, expressed in seedlings, rosette leaves and floral buds.

The protein resides in the nucleus. It localises to the chromosome. In terms of biological role, core component of the SMC5-SMC6 complex that promotes sister chromatid alignment after DNA damage and facilitates double-stranded DNA breaks (DSBs) repair via homologous recombination between sister chromatids. This chain is Structural maintenance of chromosomes protein 6A (SMC6A), found in Arabidopsis thaliana (Mouse-ear cress).